Consider the following 374-residue polypeptide: Putative F-box protein At3g17480 (374 aa).

The region spanning S6–H52 is the F-box domain.

The chain is Putative F-box protein At3g17480 from Arabidopsis thaliana (Mouse-ear cress).